Here is a 1788-residue protein sequence, read N- to C-terminus: U3 small nucleolar RNA-associated protein 10 (1788 aa).

One copy of the HEAT 1 repeat lies at 585-622; the sequence is LDFQAVVPYAIVALSDPAKKVRRAAAELVTVLGSFYET. Positions 884-905 are disordered; the sequence is PATKRRRVGSSEKSVDSQSPAD. HEAT repeat units lie at residues 926 to 962, 1049 to 1086, 1257 to 1294, 1301 to 1339, 1703 to 1740, and 1744 to 1781; these read AKHP…LVLS, QTVK…AYEH, LSIA…SESI, EALL…KYGK, EHHK…RLGE, and QSLP…TLGE.

This sequence belongs to the HEATR1/UTP10 family. In terms of assembly, component of the ribosomal small subunit (SSU) processome.

The protein resides in the nucleus. It is found in the nucleolus. Its function is as follows. Involved in nucleolar processing of pre-18S ribosomal RNA. Involved in ribosome biosynthesis. The sequence is that of U3 small nucleolar RNA-associated protein 10 (rbg-5) from Neurospora crassa (strain ATCC 24698 / 74-OR23-1A / CBS 708.71 / DSM 1257 / FGSC 987).